Reading from the N-terminus, the 227-residue chain is Cytochrome c oxidase subunit 2 (227 aa).

Over 1–14 (MAYPFQLGLQDATS) the chain is Mitochondrial intermembrane. Residues 15–45 (PIMEELMNFHDHTLMIVFLISSLVLYIISLM) traverse the membrane as a helical segment. The Mitochondrial matrix portion of the chain corresponds to 46 to 59 (LTTKLTHTSTMDAQ). A helical membrane pass occupies residues 60–87 (EVETIWTILPAAILILIALPSLRILYMM). At 88–227 (DEINNPVLTV…YFENWSASMI (140 aa)) the chain is on the mitochondrial intermembrane side. Cu cation-binding residues include H161, C196, E198, C200, H204, and M207. E198 is a Mg(2+) binding site. Y218 bears the Phosphotyrosine mark.

The protein belongs to the cytochrome c oxidase subunit 2 family. As to quaternary structure, component of the cytochrome c oxidase (complex IV, CIV), a multisubunit enzyme composed of 14 subunits. The complex is composed of a catalytic core of 3 subunits MT-CO1, MT-CO2 and MT-CO3, encoded in the mitochondrial DNA, and 11 supernumerary subunits COX4I, COX5A, COX5B, COX6A, COX6B, COX6C, COX7A, COX7B, COX7C, COX8 and NDUFA4, which are encoded in the nuclear genome. The complex exists as a monomer or a dimer and forms supercomplexes (SCs) in the inner mitochondrial membrane with NADH-ubiquinone oxidoreductase (complex I, CI) and ubiquinol-cytochrome c oxidoreductase (cytochrome b-c1 complex, complex III, CIII), resulting in different assemblies (supercomplex SCI(1)III(2)IV(1) and megacomplex MCI(2)III(2)IV(2)). Found in a complex with TMEM177, COA6, COX18, COX20, SCO1 and SCO2. Interacts with TMEM177 in a COX20-dependent manner. Interacts with COX20. Interacts with COX16. It depends on Cu cation as a cofactor.

It localises to the mitochondrion inner membrane. It carries out the reaction 4 Fe(II)-[cytochrome c] + O2 + 8 H(+)(in) = 4 Fe(III)-[cytochrome c] + 2 H2O + 4 H(+)(out). In terms of biological role, component of the cytochrome c oxidase, the last enzyme in the mitochondrial electron transport chain which drives oxidative phosphorylation. The respiratory chain contains 3 multisubunit complexes succinate dehydrogenase (complex II, CII), ubiquinol-cytochrome c oxidoreductase (cytochrome b-c1 complex, complex III, CIII) and cytochrome c oxidase (complex IV, CIV), that cooperate to transfer electrons derived from NADH and succinate to molecular oxygen, creating an electrochemical gradient over the inner membrane that drives transmembrane transport and the ATP synthase. Cytochrome c oxidase is the component of the respiratory chain that catalyzes the reduction of oxygen to water. Electrons originating from reduced cytochrome c in the intermembrane space (IMS) are transferred via the dinuclear copper A center (CU(A)) of subunit 2 and heme A of subunit 1 to the active site in subunit 1, a binuclear center (BNC) formed by heme A3 and copper B (CU(B)). The BNC reduces molecular oxygen to 2 water molecules using 4 electrons from cytochrome c in the IMS and 4 protons from the mitochondrial matrix. This Praomys tullbergi (Tullberg's soft-furred rat) protein is Cytochrome c oxidase subunit 2 (MT-CO2).